The following is a 215-amino-acid chain: UPF0056 membrane protein bbp_248 (215 aa).

A run of 6 helical transmembrane segments spans residues 10-32 (IYISFFFSLFALVNPIGMIPIFT), 52-74 (FSVAIILSISLIFGSFILNLFGI), 78-100 (SFRISGGILVMIIAISMINGNFI), 119-141 (ISIVPLAMPLIAGPGAISSTIVW), 151-169 (IFGCMVTIMLFSCFCWTLF), and 190-207 (IMGLLLMSLGIEFILAGL).

It belongs to the UPF0056 (MarC) family.

The protein resides in the cell membrane. The protein is UPF0056 membrane protein bbp_248 of Buchnera aphidicola subsp. Baizongia pistaciae (strain Bp).